We begin with the raw amino-acid sequence, 511 residues long: ATP synthase subunit alpha 1 (511 aa).

ATP is bound at residue 170–177; the sequence is GDRQTGKT.

Belongs to the ATPase alpha/beta chains family. As to quaternary structure, F-type ATPases have 2 components, CF(1) - the catalytic core - and CF(0) - the membrane proton channel. CF(1) has five subunits: alpha(3), beta(3), gamma(1), delta(1), epsilon(1). CF(0) has three main subunits: a(1), b(2) and c(9-12). The alpha and beta chains form an alternating ring which encloses part of the gamma chain. CF(1) is attached to CF(0) by a central stalk formed by the gamma and epsilon chains, while a peripheral stalk is formed by the delta and b chains.

Its subcellular location is the cell inner membrane. The catalysed reaction is ATP + H2O + 4 H(+)(in) = ADP + phosphate + 5 H(+)(out). Its function is as follows. Produces ATP from ADP in the presence of a proton gradient across the membrane. The alpha chain is a regulatory subunit. The sequence is that of ATP synthase subunit alpha 1 from Gluconobacter oxydans (strain 621H) (Gluconobacter suboxydans).